Here is a 309-residue protein sequence, read N- to C-terminus: Porphobilinogen deaminase (309 aa).

Cys-244 is modified (S-(dipyrrolylmethanemethyl)cysteine).

It belongs to the HMBS family. In terms of assembly, monomer. Dipyrromethane serves as cofactor.

The enzyme catalyses 4 porphobilinogen + H2O = hydroxymethylbilane + 4 NH4(+). It functions in the pathway porphyrin-containing compound metabolism; protoporphyrin-IX biosynthesis; coproporphyrinogen-III from 5-aminolevulinate: step 2/4. Its function is as follows. Tetrapolymerization of the monopyrrole PBG into the hydroxymethylbilane pre-uroporphyrinogen in several discrete steps. The polypeptide is Porphobilinogen deaminase (Agrobacterium fabrum (strain C58 / ATCC 33970) (Agrobacterium tumefaciens (strain C58))).